A 339-amino-acid polypeptide reads, in one-letter code: Heat-inducible transcription repressor HrcA (339 aa).

Belongs to the HrcA family.

Negative regulator of class I heat shock genes (grpE-dnaK-dnaJ and groELS operons). Prevents heat-shock induction of these operons. This is Heat-inducible transcription repressor HrcA from Thiobacillus denitrificans (strain ATCC 25259 / T1).